Here is a 365-residue protein sequence, read N- to C-terminus: Protein-glutamate methylesterase/protein-glutamine glutaminase 1 (365 aa).

In terms of domain architecture, Response regulatory spans 4 to 121 (KVLVVDDSQF…SRDSVVLKKR (118 aa)). Asp55 is modified (4-aspartylphosphate). Residues 138-173 (AARSTTQPSGVRPSALGANLSSSRSPRPASSAPSAP) form a disordered region. Positions 158-172 (SSSRSPRPASSAPSA) are enriched in low complexity. The CheB-type methylesterase domain occupies 182 to 365 (KLVAIGASTG…QVWQRLVSDV (184 aa)). Catalysis depends on residues Ser189, His216, and Asp310.

This sequence belongs to the CheB family. Post-translationally, phosphorylated by CheA. Phosphorylation of the N-terminal regulatory domain activates the methylesterase activity.

The protein localises to the cytoplasm. It carries out the reaction [protein]-L-glutamate 5-O-methyl ester + H2O = L-glutamyl-[protein] + methanol + H(+). It catalyses the reaction L-glutaminyl-[protein] + H2O = L-glutamyl-[protein] + NH4(+). Involved in chemotaxis. Part of a chemotaxis signal transduction system that modulates chemotaxis in response to various stimuli. Catalyzes the demethylation of specific methylglutamate residues introduced into the chemoreceptors (methyl-accepting chemotaxis proteins or MCP) by CheR. Also mediates the irreversible deamidation of specific glutamine residues to glutamic acid. The protein is Protein-glutamate methylesterase/protein-glutamine glutaminase 1 of Saccharophagus degradans (strain 2-40 / ATCC 43961 / DSM 17024).